The following is a 290-amino-acid chain: Protease HtpX homolog (290 aa).

The next 2 membrane-spanning stretches (helical) occupy residues 4 to 24 (IFLF…VLSL) and 39 to 59 (PMLL…SLLI). Histidine 144 lines the Zn(2+) pocket. Glutamate 145 is a catalytic residue. Zn(2+) is bound at residue histidine 148. 2 helical membrane passes run 159 to 179 (LVQG…GYFV) and 197 to 217 (ITVI…VAWF). Glutamate 222 is a Zn(2+) binding site.

Belongs to the peptidase M48B family. Requires Zn(2+) as cofactor.

It is found in the cell inner membrane. The protein is Protease HtpX homolog of Janthinobacterium sp. (strain Marseille) (Minibacterium massiliensis).